The sequence spans 317 residues: Protein translocase subunit SecF (317 aa).

6 helical membrane passes run 11–31, 135–155, 166–186, 197–217, 244–266, and 276–298; these read FYLLSLLIIIPGTIYLLLFGL, RSIVAIALASLGILGYIAFAF, ICAIIAMLHDVLVVVGIFAIL, LFVTALLTVIGFSVHDTIVVF, LVRSVNTSMTVIFTLLALYFFGG, and LLIGIVSGTYSSIFNASLLLVSW.

This sequence belongs to the SecD/SecF family. SecF subfamily. In terms of assembly, forms a complex with SecD. Part of the essential Sec protein translocation apparatus which comprises SecA, SecYEG and auxiliary proteins SecDF. Other proteins may also be involved.

It localises to the cell membrane. Functionally, part of the Sec protein translocase complex. Interacts with the SecYEG preprotein conducting channel. SecDF uses the proton motive force (PMF) to complete protein translocation after the ATP-dependent function of SecA. This chain is Protein translocase subunit SecF, found in Thermobaculum terrenum (strain ATCC BAA-798 / CCMEE 7001 / YNP1).